The chain runs to 132 residues: Thioredoxin H4-2 (132 aa).

The Thioredoxin domain occupies 18–130 (DFKGGNVHVI…LEKKVQALAD (113 aa)). Residues cysteine 56 and cysteine 59 each act as nucleophile in the active site. A disulfide bond links cysteine 56 and cysteine 59.

It belongs to the thioredoxin family. Plant H-type subfamily.

The protein localises to the cytoplasm. Probable thiol-disulfide oxidoreductase that may be involved in the redox regulation of a number of cytosolic enzymes. This chain is Thioredoxin H4-2, found in Oryza sativa subsp. japonica (Rice).